We begin with the raw amino-acid sequence, 330 residues long: Aspartate--ammonia ligase (330 aa).

This sequence belongs to the class-II aminoacyl-tRNA synthetase family. AsnA subfamily.

The protein localises to the cytoplasm. It carries out the reaction L-aspartate + NH4(+) + ATP = L-asparagine + AMP + diphosphate + H(+). It functions in the pathway amino-acid biosynthesis; L-asparagine biosynthesis; L-asparagine from L-aspartate (ammonia route): step 1/1. In Salmonella agona (strain SL483), this protein is Aspartate--ammonia ligase.